Reading from the N-terminus, the 813-residue chain is MAEKYNPQETEKKWQDKWAADRLYHASEDSPKPKWYSLTMFPYTSGNLHIGHWYAEVPADCFARYKRLRGFNVMRPVGFDSFGLPAENAAIKHNIHPRIWTLNNVENMRRQLKTIGAMFDWDREVITCLPEYYKWTQWFFLKLYEAGLAYRAKAPVNWCPSCQAVLANEQVVDGTCWRCETPTTRRDLEQWFFRITNYADELKDHEGLDWPEKITAMQRNWVGKSYGAEVSFALDCPTAFEKEIKVFTTRPDTIYGVTFMVLAPEHPLVEKITTPENKAAVDAYIKKSRTCTEIERLSTEREKDGVFTGTYVTNRVNGQKVPVWIGDYVLQSYGTGAVMGVPAHDERDFVFAQKYHLPVITVIAPSAYDGKPLEAAYINEGVMLNSGPFNGTPNTEGKEKVCDYLAEHGWGKKTVNYKLRDWLISRQRYWGAPIPMVYCEKCGIVPVPEKDLPVLLPEDVGFRSGGESPLKYNEGFVNTICPVCGGKAKRETDTMDTFMCSSWYFLRYTSPGYDKGPFDPVKLKYWMPVDLYTGGAEHAVMHLFYSRFFTKALRDMGIIDFGEPFKKLFNQGIIVSNHQKMSKSKGNVVTPDNLVAEVGTDAVRAYLMFVGPWDQGGEWNDSGLSGMSRWLNRVWNLFTEEYTPQTASAEAERELKRTLHQTIKKITMDIERLRFNTVVAALMELSNSLAKLKETAAISAENWQNTLQTFALMLAPVAPHIAEELWANLGMKYSIHNQNWPTWDEELAKDEVITLIIQVNGKLRERLEMPAGISEAEAKETALNSERVKPHLLGKTPVTVIYVPGKLVNIVVK.

A 'HIGH' region motif is present at residues 42 to 52; the sequence is PYTSGNLHIGH. The 'KMSKS' region motif lies at 580 to 584; sequence KMSKS. K583 is an ATP binding site.

It belongs to the class-I aminoacyl-tRNA synthetase family.

Its subcellular location is the cytoplasm. The enzyme catalyses tRNA(Leu) + L-leucine + ATP = L-leucyl-tRNA(Leu) + AMP + diphosphate. In Dehalococcoides mccartyi (strain ATCC BAA-2100 / JCM 16839 / KCTC 5957 / BAV1), this protein is Leucine--tRNA ligase.